A 302-amino-acid chain; its full sequence is Dioxygenase olcK (302 aa).

Positions 136, 138, and 213 each coordinate Fe cation.

The protein belongs to the PhyH family. Homodimer. Fe cation serves as cofactor.

The protein resides in the peroxisome matrix. Its pathway is secondary metabolite biosynthesis; terpenoid biosynthesis. Functionally, dioxygenase; part of the gene cluster that mediates the biosynthesis of 15-deoxyoxalicine B. The first step of the pathway is the synthesis of nicotinyl-CoA from nicotinic acid by the nicotinic acid-CoA ligase olcI. Nicotinyl-CoA is then a substrate of polyketide synthase olcA to produce 4-hydroxy-6-(3-pyridinyl)-2H-pyran-2-one (HPPO) which is further prenylated by the polyprenyl transferase olcH to yield geranylgeranyl-HPPO. Geranylgeranyl pyrophosphate is provided by the cluster-specific geranylgeranyl pyrophosphate synthase olcC. The FAD-dependent monooxygenase olcE catalyzes the epoxidation of geranylgeranyl-HPPO and the terpene cyclase olcD catalyzes the cyclization of the terpenoid component, resulting in the formation of the tricyclic terpene moiety seen in predecaturin E. The cytochrome P450 monooxygenase then catalyzes the allylic oxidation of predecaturin E, which is followed by spirocylization with concomitant loss of one molecule of water to form decaturin E. Decaturin E is the substrate of the cytochrome P450 monooxygenase olcJ which hydroxylates it at the C-29 position to form decaturin F. The short-chain dehydrogenase/reductase olcF may catalyze the oxidation of decaturin F to generate the 29-hydroxyl-27-one intermediate, and subsequent hemiacetal formation probably leads to the formation of decaturin C. The dioxygenase olcK may be a peroxisomal enzyme that catalyzes the hydroxylation of decaturin C into decaturin A once decaturin C is shuttled into the peroxisome by the MFS transporter olcL. Finally the cytochrome P450 monooxygenase olcB catalyzes the oxidative rearrangement to yield 15-deoxyoxalicine B. In the absence of olcJ, decaturin E may be shunted to a pathway in which it is oxidized to a ketone, possibly by olcF, to form decaturin D, which undergoes further allylic oxidation to yield decaturin G. Moreover, in the absence of oclK or oclL, oclB can convert decaturin C into 15-deoxyoxalicine A. In Penicillium canescens, this protein is Dioxygenase olcK.